The primary structure comprises 445 residues: UPF0210 protein Sez_0396 (445 aa).

Belongs to the UPF0210 family. Homodimer.

This is UPF0210 protein Sez_0396 from Streptococcus equi subsp. zooepidemicus (strain MGCS10565).